Here is an 86-residue protein sequence, read N- to C-terminus: Large ribosomal subunit protein bL31B (86 aa).

This sequence belongs to the bacterial ribosomal protein bL31 family. Type B subfamily. In terms of assembly, part of the 50S ribosomal subunit.

The polypeptide is Large ribosomal subunit protein bL31B (Cupriavidus metallidurans (strain ATCC 43123 / DSM 2839 / NBRC 102507 / CH34) (Ralstonia metallidurans)).